Reading from the N-terminus, the 330-residue chain is Putative pentatricopeptide repeat-containing protein At5g36300 (330 aa).

9 PPR repeats span residues Ser-10–Pro-44, Asp-45–Phe-75, Val-83–Leu-113, Asn-114–Met-148, Asp-149–Ser-179, Asn-185–Asp-215, Ser-231–Pro-265, Asn-266–Thr-296, and Asp-302–Leu-330.

It belongs to the PPR family. P subfamily.

This chain is Putative pentatricopeptide repeat-containing protein At5g36300, found in Arabidopsis thaliana (Mouse-ear cress).